Here is a 360-residue protein sequence, read N- to C-terminus: Peptide chain release factor 1 (360 aa).

An N5-methylglutamine modification is found at Gln-235.

It belongs to the prokaryotic/mitochondrial release factor family. Post-translationally, methylated by PrmC. Methylation increases the termination efficiency of RF1.

Its subcellular location is the cytoplasm. In terms of biological role, peptide chain release factor 1 directs the termination of translation in response to the peptide chain termination codons UAG and UAA. This Cupriavidus pinatubonensis (strain JMP 134 / LMG 1197) (Cupriavidus necator (strain JMP 134)) protein is Peptide chain release factor 1.